Here is a 538-residue protein sequence, read N- to C-terminus: CTP synthase (538 aa).

The amidoligase domain stretch occupies residues 1-270 (MSRTKFIFVT…DEVVLKTMGM (270 aa)). Residue serine 15 participates in CTP binding. A UTP-binding site is contributed by serine 15. Residue 16–21 (SLGKGV) coordinates ATP. L-glutamine is bound at residue tyrosine 56. Aspartate 73 is a binding site for ATP. Mg(2+) is bound by residues aspartate 73 and glutamate 143. CTP contacts are provided by residues 150 to 152 (DIE), 190 to 195 (KTKPTQ), and lysine 226. Residues 190–195 (KTKPTQ) and lysine 226 each bind UTP. The Glutamine amidotransferase type-1 domain occupies 295-537 (QIAVVGKYIS…IRASVKYSKK (243 aa)). Position 357 (glycine 357) interacts with L-glutamine. Cysteine 384 functions as the Nucleophile; for glutamine hydrolysis in the catalytic mechanism. L-glutamine-binding positions include 385-388 (LGMQ), glutamate 408, and arginine 465. Active-site residues include histidine 510 and glutamate 512.

It belongs to the CTP synthase family. Homotetramer.

The catalysed reaction is UTP + L-glutamine + ATP + H2O = CTP + L-glutamate + ADP + phosphate + 2 H(+). The enzyme catalyses L-glutamine + H2O = L-glutamate + NH4(+). It catalyses the reaction UTP + NH4(+) + ATP = CTP + ADP + phosphate + 2 H(+). It functions in the pathway pyrimidine metabolism; CTP biosynthesis via de novo pathway; CTP from UDP: step 2/2. Allosterically activated by GTP, when glutamine is the substrate; GTP has no effect on the reaction when ammonia is the substrate. The allosteric effector GTP functions by stabilizing the protein conformation that binds the tetrahedral intermediate(s) formed during glutamine hydrolysis. Inhibited by the product CTP, via allosteric rather than competitive inhibition. In terms of biological role, catalyzes the ATP-dependent amination of UTP to CTP with either L-glutamine or ammonia as the source of nitrogen. Regulates intracellular CTP levels through interactions with the four ribonucleotide triphosphates. The polypeptide is CTP synthase (Leptospira interrogans serogroup Icterohaemorrhagiae serovar copenhageni (strain Fiocruz L1-130)).